A 291-amino-acid polypeptide reads, in one-letter code: Acetyl-coenzyme A carboxylase carboxyl transferase subunit beta (291 aa).

The 263-residue stretch at 29–291 (LWSKCPECGE…MHQQPAAVSA (263 aa)) folds into the CoA carboxyltransferase N-terminal domain. Positions 33, 36, 52, and 55 each coordinate Zn(2+). Residues 33-55 (CPECGEVVYRKDLIANASVCASC) form a C4-type zinc finger.

The protein belongs to the AccD/PCCB family. As to quaternary structure, acetyl-CoA carboxylase is a heterohexamer composed of biotin carboxyl carrier protein (AccB), biotin carboxylase (AccC) and two subunits each of ACCase subunit alpha (AccA) and ACCase subunit beta (AccD). Requires Zn(2+) as cofactor.

The protein resides in the cytoplasm. It carries out the reaction N(6)-carboxybiotinyl-L-lysyl-[protein] + acetyl-CoA = N(6)-biotinyl-L-lysyl-[protein] + malonyl-CoA. The protein operates within lipid metabolism; malonyl-CoA biosynthesis; malonyl-CoA from acetyl-CoA: step 1/1. Component of the acetyl coenzyme A carboxylase (ACC) complex. Biotin carboxylase (BC) catalyzes the carboxylation of biotin on its carrier protein (BCCP) and then the CO(2) group is transferred by the transcarboxylase to acetyl-CoA to form malonyl-CoA. The chain is Acetyl-coenzyme A carboxylase carboxyl transferase subunit beta from Synechococcus sp. (strain RCC307).